A 51-amino-acid chain; its full sequence is uncharacterized protein (51 aa).

The interval 1–42 (MKMKTNKYMNMVRPAPPRRADPEGVRDPSTMGGGPNPFLRRS) is disordered.

Its subcellular location is the mitochondrion. This is an uncharacterized protein from Saccharomyces cerevisiae (strain ATCC 204508 / S288c) (Baker's yeast).